The primary structure comprises 235 residues: Small ribosomal subunit protein uS3 (235 aa).

Residues 39-107 (IRTYIENELK…ETHLNIVEVR (69 aa)) enclose the KH type-2 domain. The interval 215–235 (SERRAVEGAGDGGGQRRRENA) is disordered.

The protein belongs to the universal ribosomal protein uS3 family. As to quaternary structure, part of the 30S ribosomal subunit. Forms a tight complex with proteins S10 and S14.

Functionally, binds the lower part of the 30S subunit head. Binds mRNA in the 70S ribosome, positioning it for translation. The polypeptide is Small ribosomal subunit protein uS3 (Chelativorans sp. (strain BNC1)).